The sequence spans 318 residues: Phospho-N-acetylmuramoyl-pentapeptide-transferase (318 aa).

Helical transmembrane passes span 5–25, 50–70, 71–91, 115–135, 139–159, 173–193, 198–218, 222–242, 248–268, and 298–318; these read LKPL…VLAF, PTMG…VLAP, PSPL…IGLV, VLLG…GSVI, VTGW…LLLV, GLAA…ALTL, LVTF…YNFH, VFMG…LAIM, VLPV…LQVV, and VLFF…LLTI.

It belongs to the glycosyltransferase 4 family. MraY subfamily. It depends on Mg(2+) as a cofactor.

It localises to the cell membrane. It carries out the reaction UDP-N-acetyl-alpha-D-muramoyl-L-alanyl-gamma-D-glutamyl-meso-2,6-diaminopimeloyl-D-alanyl-D-alanine + di-trans,octa-cis-undecaprenyl phosphate = di-trans,octa-cis-undecaprenyl diphospho-N-acetyl-alpha-D-muramoyl-L-alanyl-D-glutamyl-meso-2,6-diaminopimeloyl-D-alanyl-D-alanine + UMP. The protein operates within cell wall biogenesis; peptidoglycan biosynthesis. Functionally, catalyzes the initial step of the lipid cycle reactions in the biosynthesis of the cell wall peptidoglycan: transfers peptidoglycan precursor phospho-MurNAc-pentapeptide from UDP-MurNAc-pentapeptide onto the lipid carrier undecaprenyl phosphate, yielding undecaprenyl-pyrophosphoryl-MurNAc-pentapeptide, known as lipid I. This Moorella thermoacetica (strain ATCC 39073 / JCM 9320) protein is Phospho-N-acetylmuramoyl-pentapeptide-transferase.